The chain runs to 126 residues: RutC family protein y4sK (126 aa).

This sequence belongs to the RutC family.

This is RutC family protein y4sK from Sinorhizobium fredii (strain NBRC 101917 / NGR234).